The primary structure comprises 238 residues: Probable transcriptional regulatory protein CHU_3516 (238 aa).

This sequence belongs to the TACO1 family.

The protein resides in the cytoplasm. The polypeptide is Probable transcriptional regulatory protein CHU_3516 (Cytophaga hutchinsonii (strain ATCC 33406 / DSM 1761 / CIP 103989 / NBRC 15051 / NCIMB 9469 / D465)).